The chain runs to 399 residues: MTESRSHSRRVWIKADSDVGDWKTRKRRITTGLEAGVDCVLVDPEDISRVQSLGDVSIAAFTSTADSETDSSAETEGVEEADTVVIGKESESDGTDDFPETLSASADLSAIETHSNNTVVETGAYIRILSEEYEALAETAAADASYTIVIGEDWTIIPLENLIARIGSETTLIAGVTSAEEAQTAFETLEIGADGVLLDTDDPDEIRETVAVRDATERETLELEWATVIDIERAGMADRVCVDTANLMQHNEGMLIGSMSRGLIFVHAETAESPYIASRPFRVNAGAVHAYLRTPDGGTAYLSELQSGDTVQVVNTDGQTREAIVGRVKIEKRPMFRIELEYDDDRVETLLQNAETIKVNTQSGRTAVTDLESGDEIRLFYEETARHFGEAVEESIIEK.

It belongs to the archaeal-type DHQ synthase family.

The catalysed reaction is 2-amino-2,3,7-trideoxy-D-lyxo-hept-6-ulosonate + NAD(+) + H2O = 3-dehydroquinate + NH4(+) + NADH + H(+). Its function is as follows. Catalyzes the oxidative deamination and cyclization of 2-amino-3,7-dideoxy-D-threo-hept-6-ulosonic acid (ADH) to yield 3-dehydroquinate (DHQ), which is fed into the canonical shikimic pathway of aromatic amino acid biosynthesis. This Haloquadratum walsbyi (strain DSM 16790 / HBSQ001) protein is 3-dehydroquinate synthase.